Here is a 199-residue protein sequence, read N- to C-terminus: Extracellular superoxide dismutase [Cu-Zn] (199 aa).

A signal peptide spans 1–20; that stretch reads MMIASFAIFLSHIIFITYAT. Residues Asn33, Asn60, and Asn70 are each glycosylated (N-linked (GlcNAc...) asparagine). The Cu cation site is built by His89, His91, and His106. A disulfide bridge links Cys100 with Cys192. Residue His106 coordinates Zn(2+). An N-linked (GlcNAc...) asparagine glycan is attached at Asn111. Zn(2+) is bound by residues His114, His123, and Asp126. His163 is a binding site for Cu cation.

It belongs to the Cu-Zn superoxide dismutase family. Homodimer. It depends on Cu cation as a cofactor. Zn(2+) serves as cofactor.

The protein localises to the secreted. The protein resides in the extracellular space. It catalyses the reaction 2 superoxide + 2 H(+) = H2O2 + O2. Protect the extracellular space from toxic effect of reactive oxygen intermediates by converting superoxide radicals into hydrogen peroxide and oxygen. May act in the parasite defense by neutralizing superoxide generated by activated leukocytes, thus acting as both an antioxidant and an anti-inflammatory factor. The protein is Extracellular superoxide dismutase [Cu-Zn] of Brugia pahangi (Filarial nematode worm).